The sequence spans 1197 residues: DNA-directed RNA polymerase subunit beta (1197 aa).

The segment covering 581-597 has biased composition (polar residues); that stretch reads QANSPLNDDGSFTNPTV. Disordered regions lie at residues 581–603 and 1172–1197; these read QANS…RHGD and EKPD…EENV.

This sequence belongs to the RNA polymerase beta chain family. In terms of assembly, the RNAP catalytic core consists of 2 alpha, 1 beta, 1 beta' and 1 omega subunit. When a sigma factor is associated with the core the holoenzyme is formed, which can initiate transcription.

It carries out the reaction RNA(n) + a ribonucleoside 5'-triphosphate = RNA(n+1) + diphosphate. Functionally, DNA-dependent RNA polymerase catalyzes the transcription of DNA into RNA using the four ribonucleoside triphosphates as substrates. This chain is DNA-directed RNA polymerase subunit beta, found in Oenococcus oeni (strain ATCC BAA-331 / PSU-1).